The chain runs to 248 residues: Adenosylcobinamide-GDP ribazoletransferase (248 aa).

8 helical membrane passes run 3 to 23 (ELKA…PINI), 35 to 55 (SYFP…YLLL), 63 to 83 (IVMT…HIDG), 109 to 129 (LGTN…LFLS), 135 to 155 (LLFS…VFSI), 180 to 199 (FVIA…PLKD), 200 to 219 (LALL…KYIS), and 228 to 248 (DTLG…FSIL).

This sequence belongs to the CobS family. It depends on Mg(2+) as a cofactor.

It localises to the cell membrane. It catalyses the reaction alpha-ribazole + adenosylcob(III)inamide-GDP = adenosylcob(III)alamin + GMP + H(+). The enzyme catalyses alpha-ribazole 5'-phosphate + adenosylcob(III)inamide-GDP = adenosylcob(III)alamin 5'-phosphate + GMP + H(+). Its pathway is cofactor biosynthesis; adenosylcobalamin biosynthesis; adenosylcobalamin from cob(II)yrinate a,c-diamide: step 7/7. Functionally, joins adenosylcobinamide-GDP and alpha-ribazole to generate adenosylcobalamin (Ado-cobalamin). Also synthesizes adenosylcobalamin 5'-phosphate from adenosylcobinamide-GDP and alpha-ribazole 5'-phosphate. The chain is Adenosylcobinamide-GDP ribazoletransferase from Caldanaerobacter subterraneus subsp. tengcongensis (strain DSM 15242 / JCM 11007 / NBRC 100824 / MB4) (Thermoanaerobacter tengcongensis).